A 586-amino-acid polypeptide reads, in one-letter code: Kelch-like protein 7 (586 aa).

Positions 44–111 constitute a BTB domain; that stretch reads CDVILMVQER…AYTARISVNS (68 aa). The BACK domain maps to 146 to 248; it reads CLGISVLAEC…SKNFLSKTVQ (103 aa). Kelch repeat units lie at residues 294 to 336, 337 to 382, 383 to 430, 431 to 481, 483 to 528, and 530 to 575; these read RIAL…FWDN, VVYI…AAEG, KIYT…EANG, LIYV…FVKD, IFAV…AVGS, and VYVL…CVVD.

As to quaternary structure, homodimer. Component of the BCR(KLHL7) E3 ubiquitin ligase complex.

The protein localises to the nucleus. It localises to the cytoplasm. Its pathway is protein modification; protein ubiquitination. Its function is as follows. Substrate-specific adapter of a BCR (BTB-CUL3-RBX1) E3 ubiquitin ligase complex. The BCR(KLHL7) complex acts by mediating ubiquitination and subsequent degradation of substrate proteins. Probably mediates 'Lys-48'-linked ubiquitination. This is Kelch-like protein 7 (KLHL7) from Gallus gallus (Chicken).